A 261-amino-acid polypeptide reads, in one-letter code: tRNA pseudouridine synthase A (261 aa).

The Nucleophile role is filled by aspartate 51. Tyrosine 109 contributes to the substrate binding site.

It belongs to the tRNA pseudouridine synthase TruA family. Homodimer.

It catalyses the reaction uridine(38/39/40) in tRNA = pseudouridine(38/39/40) in tRNA. Its function is as follows. Formation of pseudouridine at positions 38, 39 and 40 in the anticodon stem and loop of transfer RNAs. The polypeptide is tRNA pseudouridine synthase A (Shewanella sp. (strain MR-7)).